Reading from the N-terminus, the 372-residue chain is Chaperone protein DnaJ (372 aa).

Residues aspartate 5–glycine 70 form the J domain. A CR-type zinc finger spans residues glycine 127–tyrosine 205. Residues cysteine 140, cysteine 143, cysteine 157, cysteine 160, cysteine 179, cysteine 182, cysteine 193, and cysteine 196 each contribute to the Zn(2+) site. CXXCXGXG motif repeat units follow at residues cysteine 140–glycine 147, cysteine 157–glycine 164, cysteine 179–glycine 186, and cysteine 193–glycine 200.

It belongs to the DnaJ family. In terms of assembly, homodimer. Zn(2+) is required as a cofactor.

The protein localises to the cytoplasm. Its function is as follows. Participates actively in the response to hyperosmotic and heat shock by preventing the aggregation of stress-denatured proteins and by disaggregating proteins, also in an autonomous, DnaK-independent fashion. Unfolded proteins bind initially to DnaJ; upon interaction with the DnaJ-bound protein, DnaK hydrolyzes its bound ATP, resulting in the formation of a stable complex. GrpE releases ADP from DnaK; ATP binding to DnaK triggers the release of the substrate protein, thus completing the reaction cycle. Several rounds of ATP-dependent interactions between DnaJ, DnaK and GrpE are required for fully efficient folding. Also involved, together with DnaK and GrpE, in the DNA replication of plasmids through activation of initiation proteins. This chain is Chaperone protein DnaJ, found in Photorhabdus laumondii subsp. laumondii (strain DSM 15139 / CIP 105565 / TT01) (Photorhabdus luminescens subsp. laumondii).